A 417-amino-acid polypeptide reads, in one-letter code: Gamma-glutamyl phosphate reductase (417 aa).

This sequence belongs to the gamma-glutamyl phosphate reductase family.

It is found in the cytoplasm. The enzyme catalyses L-glutamate 5-semialdehyde + phosphate + NADP(+) = L-glutamyl 5-phosphate + NADPH + H(+). The protein operates within amino-acid biosynthesis; L-proline biosynthesis; L-glutamate 5-semialdehyde from L-glutamate: step 2/2. Functionally, catalyzes the NADPH-dependent reduction of L-glutamate 5-phosphate into L-glutamate 5-semialdehyde and phosphate. The product spontaneously undergoes cyclization to form 1-pyrroline-5-carboxylate. This is Gamma-glutamyl phosphate reductase from Pectobacterium carotovorum subsp. carotovorum (strain PC1).